The chain runs to 285 residues: Polyamine aminopropyltransferase (285 aa).

The PABS domain maps to 5 to 241 (DNWYIEHFQP…GWWSVTMASK (237 aa)). S-methyl-5'-thioadenosine is bound at residue Gln35. Spermidine is bound by residues His66 and Asp90. S-methyl-5'-thioadenosine-binding positions include Asp110 and 141–142 (DG). The Proton acceptor role is filled by Asp160. Residue 160 to 163 (DSTD) participates in spermidine binding. Pro167 provides a ligand contact to S-methyl-5'-thioadenosine.

It belongs to the spermidine/spermine synthase family. In terms of assembly, homodimer or homotetramer.

The protein localises to the cytoplasm. The enzyme catalyses S-adenosyl 3-(methylsulfanyl)propylamine + putrescine = S-methyl-5'-thioadenosine + spermidine + H(+). Its pathway is amine and polyamine biosynthesis; spermidine biosynthesis; spermidine from putrescine: step 1/1. Functionally, catalyzes the irreversible transfer of a propylamine group from the amino donor S-adenosylmethioninamine (decarboxy-AdoMet) to putrescine (1,4-diaminobutane) to yield spermidine. The sequence is that of Polyamine aminopropyltransferase from Xanthomonas euvesicatoria pv. vesicatoria (strain 85-10) (Xanthomonas campestris pv. vesicatoria).